We begin with the raw amino-acid sequence, 275 residues long: 2-dehydro-3-deoxyphosphooctonate aldolase (275 aa).

It belongs to the KdsA family.

The protein resides in the cytoplasm. It carries out the reaction D-arabinose 5-phosphate + phosphoenolpyruvate + H2O = 3-deoxy-alpha-D-manno-2-octulosonate-8-phosphate + phosphate. The protein operates within carbohydrate biosynthesis; 3-deoxy-D-manno-octulosonate biosynthesis; 3-deoxy-D-manno-octulosonate from D-ribulose 5-phosphate: step 2/3. It functions in the pathway bacterial outer membrane biogenesis; lipopolysaccharide biosynthesis. This is 2-dehydro-3-deoxyphosphooctonate aldolase from Francisella philomiragia subsp. philomiragia (strain ATCC 25017 / CCUG 19701 / FSC 153 / O#319-036).